Here is a 622-residue protein sequence, read N- to C-terminus: UvrABC system protein C (622 aa).

Residues 13-92 (DKPGVYLMKN…IKENRPKYNV (80 aa)) enclose the GIY-YIG domain. In terms of domain architecture, UVR spans 205–240 (DELIKKIEEKMKRAAEKMDFEGAAHYRDQRQALLDI).

It belongs to the UvrC family. Interacts with UvrB in an incision complex.

The protein localises to the cytoplasm. Functionally, the UvrABC repair system catalyzes the recognition and processing of DNA lesions. UvrC both incises the 5' and 3' sides of the lesion. The N-terminal half is responsible for the 3' incision and the C-terminal half is responsible for the 5' incision. This chain is UvrABC system protein C, found in Alkaliphilus metalliredigens (strain QYMF).